We begin with the raw amino-acid sequence, 934 residues long: Protein translocase subunit SecA (934 aa).

ATP is bound by residues Q87, G105–T109, and D515. Zn(2+)-binding residues include C918, C920, C929, and H930.

Belongs to the SecA family. In terms of assembly, monomer and homodimer. Part of the essential Sec protein translocation apparatus which comprises SecA, SecYEG and auxiliary proteins SecDF-YajC and YidC. Requires Zn(2+) as cofactor.

The protein localises to the cell inner membrane. The protein resides in the cytoplasm. It carries out the reaction ATP + H2O + cellular proteinSide 1 = ADP + phosphate + cellular proteinSide 2.. Its function is as follows. Part of the Sec protein translocase complex. Interacts with the SecYEG preprotein conducting channel. Has a central role in coupling the hydrolysis of ATP to the transfer of proteins into and across the cell membrane, serving both as a receptor for the preprotein-SecB complex and as an ATP-driven molecular motor driving the stepwise translocation of polypeptide chains across the membrane. This is Protein translocase subunit SecA from Ralstonia nicotianae (strain ATCC BAA-1114 / GMI1000) (Ralstonia solanacearum).